We begin with the raw amino-acid sequence, 722 residues long: Threonine--tRNA ligase 1, cytoplasmic (722 aa).

The span at 1–10 shows a compositional bias: polar residues; sequence MSQEKASSPS. The segment at 1 to 48 is disordered; the sequence is MSQEKASSPSGKMDGEKPVDASEEKRKEGGKKKSKDGGGDGGRAELNP. Positions 13-27 are enriched in basic and acidic residues; the sequence is MDGEKPVDASEEKRK. One can recognise a TGS domain in the interval 78–142; sequence DSKPIKVTLP…ETDCTLELLK (65 aa). N6-acetyllysine is present on Lys242. Thr245 carries the phosphothreonine modification. Residue Tyr297 is modified to Phosphotyrosine. Thr452 carries the phosphothreonine modification.

The protein belongs to the class-II aminoacyl-tRNA synthetase family. Homodimer. Post-translationally, ISGylated.

The protein resides in the cytoplasm. The enzyme catalyses tRNA(Thr) + L-threonine + ATP = L-threonyl-tRNA(Thr) + AMP + diphosphate + H(+). Functionally, catalyzes the attachment of threonine to tRNA(Thr) in a two-step reaction: threonine is first activated by ATP to form Thr-AMP and then transferred to the acceptor end of tRNA(Thr). Also edits incorrectly charged tRNA(Thr) via its editing domain, at the post-transfer stage. The sequence is that of Threonine--tRNA ligase 1, cytoplasmic (Tars1) from Mus musculus (Mouse).